A 290-amino-acid chain; its full sequence is Small ribosomal subunit protein uS11 (290 aa).

A disordered region spans residues 243–271; it reads DWEAAPAGFPATGEWSDAAPGAAAPNWDA. Over residues 257-271 the composition is skewed to low complexity; the sequence is WSDAAPGAAAPNWDA.

Belongs to the universal ribosomal protein uS2 family. As to quaternary structure, component of the small ribosomal subunit (SSU). Mature N.crassa ribosomes consist of a small (40S) and a large (60S) subunit. The 40S small subunit contains 1 molecule of ribosomal RNA (18S rRNA) and at least 32 different proteins. The large 60S subunit contains 3 rRNA molecules (26S, 5.8S and 5S rRNA) and at least 42 different proteins. Interacts with rps21.

It localises to the cytoplasm. In terms of biological role, component of the ribosome, a large ribonucleoprotein complex responsible for the synthesis of proteins in the cell. The small ribosomal subunit (SSU) binds messenger RNAs (mRNAs) and translates the encoded message by selecting cognate aminoacyl-transfer RNA (tRNA) molecules. The large subunit (LSU) contains the ribosomal catalytic site termed the peptidyl transferase center (PTC), which catalyzes the formation of peptide bonds, thereby polymerizing the amino acids delivered by tRNAs into a polypeptide chain. The nascent polypeptides leave the ribosome through a tunnel in the LSU and interact with protein factors that function in enzymatic processing, targeting, and the membrane insertion of nascent chains at the exit of the ribosomal tunnel. uS2 is required for the assembly and/or stability of the 40S ribosomal subunit. Required for the processing of the 20S rRNA-precursor to mature 18S rRNA in a late step of the maturation of 40S ribosomal subunits. The chain is Small ribosomal subunit protein uS11 from Neurospora crassa (strain ATCC 24698 / 74-OR23-1A / CBS 708.71 / DSM 1257 / FGSC 987).